The sequence spans 136 residues: Small ribosomal subunit protein uS9 (136 aa).

The disordered stretch occupies residues 97 to 136 (SPDNRKPLKTEGHLSRDPRAKERRKYGLKKARKAPQFSKR). Residues 98–116 (PDNRKPLKTEGHLSRDPRA) are compositionally biased toward basic and acidic residues. Residues 117–136 (KERRKYGLKKARKAPQFSKR) are compositionally biased toward basic residues.

Belongs to the universal ribosomal protein uS9 family.

In Prochlorococcus marinus (strain MIT 9312), this protein is Small ribosomal subunit protein uS9.